The sequence spans 84 residues: Small ribosomal subunit protein bS18A (84 aa).

This sequence belongs to the bacterial ribosomal protein bS18 family. In terms of assembly, part of the 30S ribosomal subunit. Forms a tight heterodimer with protein bS6.

In terms of biological role, binds as a heterodimer with protein bS6 to the central domain of the 16S rRNA, where it helps stabilize the platform of the 30S subunit. The polypeptide is Small ribosomal subunit protein bS18A (Frankia alni (strain DSM 45986 / CECT 9034 / ACN14a)).